A 432-amino-acid polypeptide reads, in one-letter code: Adenylosuccinate synthetase (432 aa).

GTP is bound by residues 12-18 (GDEGKGK) and 40-42 (GHT). Aspartate 13 functions as the Proton acceptor in the catalytic mechanism. 2 residues coordinate Mg(2+): aspartate 13 and glycine 40. IMP-binding positions include 13–16 (DEGK), 38–41 (NAGH), threonine 131, arginine 145, glutamine 226, threonine 241, and arginine 305. The Proton donor role is filled by histidine 41. Residue 301–307 (ATTGRPR) coordinates substrate. Residues arginine 307, 333 to 335 (KLD), and 415 to 417 (STG) each bind GTP.

This sequence belongs to the adenylosuccinate synthetase family. As to quaternary structure, homodimer. It depends on Mg(2+) as a cofactor.

The protein resides in the cytoplasm. The catalysed reaction is IMP + L-aspartate + GTP = N(6)-(1,2-dicarboxyethyl)-AMP + GDP + phosphate + 2 H(+). Its pathway is purine metabolism; AMP biosynthesis via de novo pathway; AMP from IMP: step 1/2. Its function is as follows. Plays an important role in the de novo pathway of purine nucleotide biosynthesis. Catalyzes the first committed step in the biosynthesis of AMP from IMP. The sequence is that of Adenylosuccinate synthetase from Magnetococcus marinus (strain ATCC BAA-1437 / JCM 17883 / MC-1).